The chain runs to 822 residues: uncharacterized protein (822 aa).

The tract at residues 1–230 (MARGKRSTQR…NAAPLNKTDA (230 aa)) is disordered. S27 carries the post-translational modification Phosphoserine. The segment covering 34-44 (SKAKKNKKKLN) has biased composition (basic residues). 3 positions are modified to phosphoserine: S47, S51, and S55. Y57 is subject to Phosphotyrosine. Positions 61–70 (PEDDEVDEEV) are enriched in acidic residues. A compositionally biased stretch (basic residues) spans 73–85 (VKKKPSKKSKKAK). Over residues 92 to 106 (FADEQSVEEEEEEDS) the composition is skewed to acidic residues. A Phosphoserine modification is found at S97. Residues 111–121 (RKNKKSSKKAS) show a composition bias toward basic residues. Composition is skewed to acidic residues over residues 129–144 (LADD…EESE) and 163–172 (SEALDDGDIE). S137 and S163 each carry phosphoserine. ABC transporter domains follow at residues 276-519 (LQVE…VQLA) and 594-809 (IKFQ…AKER). ATP is bound by residues 308–315 (APNGSGKS) and 627–634 (GPNGAGKT).

It belongs to the ABC transporter superfamily.

Its subcellular location is the cytoplasm. This is an uncharacterized protein from Schizosaccharomyces pombe (strain 972 / ATCC 24843) (Fission yeast).